Consider the following 218-residue polypeptide: Monomethylamine corrinoid protein 1 (218 aa).

One can recognise a B12-binding N-terminal domain in the interval 1-91; the sequence is MANQEIFDKL…ELEKTKVEGE (91 aa). Residues 94 to 218 enclose the B12-binding domain; it reads TGLAITFVAE…AAKVALNIMK (125 aa). H107 provides a ligand contact to methylcob(III)alamin.

This sequence belongs to the methylamine corrinoid protein family. As to quaternary structure, can form a complex with MtmB.

It functions in the pathway one-carbon metabolism; methanogenesis from methylamine. Its function is as follows. Acts as a methyl group carrier between MtmB and MtbA. In Methanosarcina mazei (strain ATCC BAA-159 / DSM 3647 / Goe1 / Go1 / JCM 11833 / OCM 88) (Methanosarcina frisia), this protein is Monomethylamine corrinoid protein 1 (mtmC1).